Consider the following 917-residue polypeptide: von Willebrand factor A domain-containing protein DDB_G0285975 (917 aa).

The tract at residues 12 to 51 (DTTTTTTPTTPTTPTTPTTTPTTTTTPTTTPTTTTTSTTP) is disordered. A compositionally biased stretch (low complexity) spans 13 to 51 (TTTTTTPTTPTTPTTPTTTPTTTTTPTTTPTTTTTSTTP). The VIT domain maps to 87-215 (RYNTGLKNIS…NVTIHLTIIS (129 aa)). The 169-residue stretch at 339-507 (EFIFLIDCSG…NFEEQVMKLV (169 aa)) folds into the VWFA domain. A t-SNARE coiled-coil homology domain is found at 679-741 (LFSSENRNQT…INSIPQKSNI (63 aa)). 2 stretches are compositionally biased toward low complexity: residues 751-760 (SPSEVSTSKS) and 774-818 (NNNN…NNNN). Residues 751 to 822 (SPSEVSTSKS…NNNNNNSDNS (72 aa)) are disordered.

This Dictyostelium discoideum (Social amoeba) protein is von Willebrand factor A domain-containing protein DDB_G0285975.